The following is a 689-amino-acid chain: Glycine--tRNA ligase beta subunit (689 aa).

The protein belongs to the class-II aminoacyl-tRNA synthetase family. Tetramer of two alpha and two beta subunits.

It localises to the cytoplasm. The enzyme catalyses tRNA(Gly) + glycine + ATP = glycyl-tRNA(Gly) + AMP + diphosphate. The protein is Glycine--tRNA ligase beta subunit of Edwardsiella ictaluri (strain 93-146).